The primary structure comprises 190 residues: MVITRNMKARATSVSHRQSQQDPESPVKKFFKLVLPSTMKDKMMRIPPRFVKLQGSKLSEVVTLVTPAGYKRSIKLKRIGEEIWFHEGWSEFAEAHSIEEGHFLLFEYKKNSSFRVIIFNASACETNYPLDAVHIIDSDDDVIEITGKEFDTEHKSKKRPRDIEFDKILHDVDVMQVLKEEEEDKRVLRG.

The interval 1 to 25 is disordered; sequence MVITRNMKARATSVSHRQSQQDPES. Polar residues predominate over residues 12–23; it reads TSVSHRQSQQDP. The TF-B3 DNA-binding region spans 29–122; sequence KFFKLVLPST…SFRVIIFNAS (94 aa).

The protein resides in the nucleus. The chain is B3 domain-containing protein At4g01580 from Arabidopsis thaliana (Mouse-ear cress).